A 342-amino-acid polypeptide reads, in one-letter code: MAGRLHVEVRLQDGVIRAVDTRLQRPLPQISRLLVGQTAEAALRRLPLLFGLCAAAQQVAALRALERAAGWAAIAEVEEGRTRLGELESIRESLLRLVQVWELPVPLERLKALLALCRRAAARLQALTAFRAAPLPADAELEGTLAALAAAWADLQPPAPADWLRPRLDRWQEVALGGPPPQAFTADELPALLAQLRASDARAEIAGQPRLGGPAASAGAQATASAQIEQHVGALLRRTAQAIDSLQSPPAPPAVAGLAAGEGVGLARTARGWLLHRVCLDDGAVGTWQLLAPTDWNFHADGPLRRRLCGVRVAAGEVEALLRELILALDPCVAFEVKIVHA.

The protein belongs to the HupK family.

This is Hydrogenase expression/formation protein HupK (hupK) from Azotobacter vinelandii.